We begin with the raw amino-acid sequence, 201 residues long: Cysteine dioxygenase type 1 (201 aa).

Residues histidine 86, histidine 88, and histidine 141 each contribute to the Fe cation site. Residues 93–158 constitute a cross-link (3'-(S-cysteinyl)-tyrosine (Cys-Tyr)); that stretch reads CFLKLLQGQL…TEPAVSLHLY (66 aa).

Belongs to the cysteine dioxygenase family. In terms of assembly, monomer. It depends on Fe cation as a cofactor. Ni(2+) serves as cofactor. The cofactor is Zn(2+). In terms of processing, the thioether cross-link between Cys-93 and Tyr-158 plays a structural role through stabilizing the Fe(2+) ion, and prevents the production of highly damaging free hydroxyl radicals by holding the oxygen radical via hydroxyl hydrogen.

The catalysed reaction is L-cysteine + O2 = 3-sulfino-L-alanine + H(+). It functions in the pathway organosulfur biosynthesis; taurine biosynthesis; hypotaurine from L-cysteine: step 1/2. Its function is as follows. Catalyzes the oxidation of cysteine to cysteine sulfinic acid with addition of molecular dioxygen. The sequence is that of Cysteine dioxygenase type 1 (cdo1) from Danio rerio (Zebrafish).